Here is a 764-residue protein sequence, read N- to C-terminus: Protein FAR1-RELATED SEQUENCE 7 (764 aa).

In terms of domain architecture, FAR1 1 spans 42–118 (DYYNSYATRT…QKEHNHDLGG (77 aa)). The interval 119 to 144 (HIEEAQTTPRPSVQQRAPAPTKLGIS) is disordered. Residues 123-133 (AQTTPRPSVQQ) show a composition bias toward polar residues. The FAR1 2 domain occupies 204–280 (QFYQAYAEVV…NKDHNHDLEP (77 aa)). The 97-residue stretch at 375–471 (AVVFDTSYRK…SAWQIRSKER (97 aa)) folds into the MULE domain. An SWIM-type zinc finger spans residues 650–686 (HAVTFSASNLNASCSCQMFEYEGLLCRHILKVFNLLD).

The protein belongs to the FHY3/FAR1 family. In terms of tissue distribution, expressed in hypocotyls, rosette and cauline leaves, inflorescences stems, flowers and siliques.

The protein resides in the nucleus. In terms of biological role, putative transcription activator involved in regulating light control of development. This is Protein FAR1-RELATED SEQUENCE 7 (FRS7) from Arabidopsis thaliana (Mouse-ear cress).